A 2231-amino-acid chain; its full sequence is Helicase SEN1 (2231 aa).

Low complexity predominate over residues 1 to 17; the sequence is MNSNNPDNNNSNNINNN. 2 disordered regions span residues 1–24 and 1032–1061; these read MNSN…KDIA and HPPS…SDND. Residues glutamine 1339 and 1360 to 1364 each bind ATP; that span reads GTGKT. The tract at residues 1491-1511 is disordered; that stretch reads ELRGKLDSESGNPESPMSTED. The span at 1499-1510 shows a compositional bias: polar residues; sequence ESGNPESPMSTE. 3 residues coordinate ATP: glutamine 1619, tyrosine 1655, and glutamate 1787. Disordered regions lie at residues 1894–1993 and 2032–2231; these read ITQG…AVVG and QLGL…KPRS. Residues 1909-1927 carry the Nuclear localization signal motif; that stretch reads KRRVVDEGEEADKAVKKKK. The segment covering 1923-1937 has biased composition (basic residues); it reads VKKKKKEKKKEKKKS. Residues 1938–1950 show a composition bias toward basic and acidic residues; it reads KADDKKKNNKKAE. The segment covering 2048–2058 has biased composition (acidic residues); it reads NNEDDDDEDDY. Polar residues-rich tracts occupy residues 2060 to 2088 and 2095 to 2104; these read PSIS…NFSA and QVSQAKQTQV. A compositionally biased stretch (low complexity) spans 2114–2123; sequence SNSVLSGGSS. Residues 2134–2160 show a composition bias toward polar residues; the sequence is PNQNGQNGANRTLSQHVGNANQYSTAP. A compositionally biased stretch (low complexity) spans 2210 to 2220; sequence RNSSRRNASSS.

Belongs to the DNA2/NAM7 helicase family. As to quaternary structure, interacts with RAD2, RNT1 and RPB1. Binds to multiple snoRNAs.

The protein localises to the nucleus. ATP-dependent 5'-&gt;3' DNA/RNA helicase required for the expression and maturation of diverse classes of non-protein-coding RNAs like precursor tRNAs, rRNAs and small nuclear (snRNA) and nucleolar (snoRNA) RNAs. Directs RNA polymerase II transcription termination on snoRNAs as well as on several short protein-coding genes. May also play a role in transcription-coupled nucleotide excision repair. The sequence is that of Helicase SEN1 (SEN1) from Saccharomyces cerevisiae (strain ATCC 204508 / S288c) (Baker's yeast).